Here is a 265-residue protein sequence, read N- to C-terminus: 5'-nucleotidase SurE (265 aa).

A divalent metal cation-binding residues include aspartate 8, aspartate 9, serine 40, and asparagine 98.

It belongs to the SurE nucleotidase family. A divalent metal cation is required as a cofactor.

The protein localises to the cytoplasm. It carries out the reaction a ribonucleoside 5'-phosphate + H2O = a ribonucleoside + phosphate. Its function is as follows. Nucleotidase that shows phosphatase activity on nucleoside 5'-monophosphates. The polypeptide is 5'-nucleotidase SurE (Nostoc sp. (strain PCC 7120 / SAG 25.82 / UTEX 2576)).